The sequence spans 1505 residues: Probable serine/threonine-protein kinase DDB_G0280133 (1505 aa).

3 consecutive PAS domains span residues 2 to 72, 108 to 178, and 215 to 284; these read NTHN…FETG, RMFI…YHGG, and DMFK…TDSH. Disordered regions lie at residues 282–348 and 398–533; these read DSHD…FNHS and RVYG…ESSY. Composition is skewed to low complexity over residues 289-314 and 328-344; these read QQQQ…TTST and SSPP…TPTT. 2 stretches are compositionally biased toward basic and acidic residues: residues 398-407 and 415-430; these read RVYGKDKDKN and ENKD…ESKE. Basic residues predominate over residues 431–443; sequence HRHSKEKKKRKKD. The span at 448–468 shows a compositional bias: low complexity; it reads NNNNNNNNNNNNNNEQTSDSS. The segment covering 479 to 489 has biased composition (basic residues); sequence SKKKRSSKKKS. Positions 515-532 are enriched in low complexity; that stretch reads SSNSSSNSSHSNAPHESS. The Protein kinase domain maps to 542-805; sequence YTLGKTLGRG…IMNVLNHPWL (264 aa). ATP contacts are provided by residues 548–556 and K571; that span reads LGRGNYGVV. D684 (proton acceptor) is an active-site residue. Over residues 855 to 960 the composition is skewed to low complexity; that stretch reads NILNNNNNNN…NNTNSIINNN (106 aa). Disordered regions lie at residues 855–1048, 1072–1091, and 1181–1358; these read NILN…SHQQ, QPNQ…QLQQ, and QQQQ…DEEN. A coiled-coil region spans residues 903–939; it reads NNNNNINNNINNNNNVNNNVNNNKNNNNNNNNNSNNN. Residues 961–974 show a composition bias toward polar residues; sequence LYNQSLSPQNNNIY. 2 stretches are compositionally biased toward low complexity: residues 975-1013 and 1022-1048; these read QHSP…QQQH and QQHQ…SHQQ. Positions 1072–1082 are enriched in polar residues; sequence QPNQQVSFDTN. Residues 1125 to 1189 adopt a coiled-coil conformation; sequence IQQIQQLQQQ…QQQQQQQQND (65 aa). The segment covering 1202–1271 has biased composition (basic and acidic residues); sequence SKRDNSYNKR…NSRDNNRYNN (70 aa). Positions 1272 to 1282 are enriched in low complexity; sequence RDNNNNNNSNN. Basic and acidic residues-rich tracts occupy residues 1283–1301 and 1313–1326; these read NRER…DYGK and NKDK…KPDF. Positions 1331 to 1347 are enriched in polar residues; that stretch reads SLKNDSSSNYGTISSGR. The 65-residue stretch at 1399–1463 folds into the FHA domain; sequence FLFGRNRDIA…NGTFLKGEKI (65 aa).

It belongs to the protein kinase superfamily. CAMK Ser/Thr protein kinase family. SNF1 subfamily.

It catalyses the reaction L-seryl-[protein] + ATP = O-phospho-L-seryl-[protein] + ADP + H(+). The enzyme catalyses L-threonyl-[protein] + ATP = O-phospho-L-threonyl-[protein] + ADP + H(+). This is Probable serine/threonine-protein kinase DDB_G0280133 from Dictyostelium discoideum (Social amoeba).